A 161-amino-acid polypeptide reads, in one-letter code: UPF0262 protein mll6455 (161 aa).

Belongs to the UPF0262 family.

The polypeptide is UPF0262 protein mll6455 (Mesorhizobium japonicum (strain LMG 29417 / CECT 9101 / MAFF 303099) (Mesorhizobium loti (strain MAFF 303099))).